Here is a 440-residue protein sequence, read N- to C-terminus: Transposon Ty1-LR4 Gag polyprotein (440 aa).

Polar residues-rich tracts occupy residues Met-1–Pro-10, Thr-48–Ser-60, and Gln-127–Phe-152. Disordered regions lie at residues Met-1–Gln-93, Pro-126–Pro-173, and Gly-352–Tyr-440. Low complexity predominate over residues Thr-153–Thr-165. Positions Asn-299–His-401 are RNA-binding. Positions Asn-402 to Ser-418 are enriched in low complexity. Ser-416 bears the Phosphoserine mark. A compositionally biased stretch (polar residues) spans Lys-419–Asn-428. The span at Asn-429–Tyr-440 shows a compositional bias: basic and acidic residues.

In terms of assembly, homotrimer.

It localises to the cytoplasm. Functionally, capsid protein (CA) is the structural component of the virus-like particle (VLP), forming the shell that encapsulates the retrotransposons dimeric RNA genome. The particles are assembled from trimer-clustered units and there are holes in the capsid shells that allow for the diffusion of macromolecules. CA also has nucleocapsid-like chaperone activity, promoting primer tRNA(i)-Met annealing to the multipartite primer-binding site (PBS), dimerization of Ty1 RNA and initiation of reverse transcription. The protein is Transposon Ty1-LR4 Gag polyprotein (TY1A-LR4) of Saccharomyces cerevisiae (strain ATCC 204508 / S288c) (Baker's yeast).